Consider the following 265-residue polypeptide: 14-3-3-like protein GF14-D (265 aa).

Residues 244-265 (DANDDGGDEIKEAAAPKEPGDQ) are disordered. Residues 251–265 (DEIKEAAAPKEPGDQ) show a composition bias toward basic and acidic residues.

The protein belongs to the 14-3-3 family. As to quaternary structure, interacts with BZR1. Interacts with ABI5.

Its function is as follows. Is associated with a DNA binding complex that binds to the G box, a well-characterized cis-acting DNA regulatory element found in plant genes. The polypeptide is 14-3-3-like protein GF14-D (GF14D) (Oryza sativa subsp. japonica (Rice)).